A 134-amino-acid chain; its full sequence is uncharacterized protein (134 aa).

Its subcellular location is the mitochondrion. This is an uncharacterized protein from Saccharomyces cerevisiae (strain ATCC 204508 / S288c) (Baker's yeast).